A 105-amino-acid polypeptide reads, in one-letter code: Large ribosomal subunit protein uL24 (105 aa).

Basic and acidic residues predominate over residues 77–93 (DGKPTRVGYRKDDETGK). Positions 77-105 (DGKPTRVGYRKDDETGKNVRIAKSNGKDL) are disordered.

The protein belongs to the universal ribosomal protein uL24 family. Part of the 50S ribosomal subunit.

Its function is as follows. One of two assembly initiator proteins, it binds directly to the 5'-end of the 23S rRNA, where it nucleates assembly of the 50S subunit. Functionally, one of the proteins that surrounds the polypeptide exit tunnel on the outside of the subunit. The protein is Large ribosomal subunit protein uL24 of Mycolicibacterium gilvum (strain PYR-GCK) (Mycobacterium gilvum (strain PYR-GCK)).